We begin with the raw amino-acid sequence, 144 residues long: Nucleoside diphosphate kinase (144 aa).

6 residues coordinate ATP: Lys5, Phe53, Arg81, Thr87, Arg98, and Asn108. The active-site Pros-phosphohistidine intermediate is His111.

It belongs to the NDK family. The cofactor is Mg(2+).

The catalysed reaction is a 2'-deoxyribonucleoside 5'-diphosphate + ATP = a 2'-deoxyribonucleoside 5'-triphosphate + ADP. It catalyses the reaction a ribonucleoside 5'-diphosphate + ATP = a ribonucleoside 5'-triphosphate + ADP. Its function is as follows. Major role in the synthesis of nucleoside triphosphates other than ATP. The ATP gamma phosphate is transferred to the NDP beta phosphate via a ping-pong mechanism, using a phosphorylated active-site intermediate. The sequence is that of Nucleoside diphosphate kinase from Solanum lycopersicum (Tomato).